A 185-amino-acid polypeptide reads, in one-letter code: MEEQEEKQYNQNIQDNEEGTQMREELQESTSAQQTLQEQEIDYQAKYLELKDQYVRAFADFENTKKRLERDKNQSLEYAYERIMNDLLPVLDTLEKALESAQSNPEAGAIAQGLQLTLEGFLKVLSKHGVEVIATDGEFDPNLHECLMQVPDANKNDGEILQTLQKGFVYKHRVLRPSMVSVVKN.

The tract at residues 1–37 (MEEQEEKQYNQNIQDNEEGTQMREELQESTSAQQTLQ) is disordered. Over residues 28-37 (ESTSAQQTLQ) the composition is skewed to polar residues.

It belongs to the GrpE family. As to quaternary structure, homodimer.

It localises to the cytoplasm. In terms of biological role, participates actively in the response to hyperosmotic and heat shock by preventing the aggregation of stress-denatured proteins, in association with DnaK and GrpE. It is the nucleotide exchange factor for DnaK and may function as a thermosensor. Unfolded proteins bind initially to DnaJ; upon interaction with the DnaJ-bound protein, DnaK hydrolyzes its bound ATP, resulting in the formation of a stable complex. GrpE releases ADP from DnaK; ATP binding to DnaK triggers the release of the substrate protein, thus completing the reaction cycle. Several rounds of ATP-dependent interactions between DnaJ, DnaK and GrpE are required for fully efficient folding. The chain is Protein GrpE from Helicobacter hepaticus (strain ATCC 51449 / 3B1).